Reading from the N-terminus, the 513-residue chain is MQLNSTEISELIKQRIAQFNVVSEAHNEGTIVSVSDGIIRVHGLAEVMQGEMIALPGNRFAIALNLERDSVGAVVMGPYADLAEGMKVKCTGRILEVPVGRGLLGRVVNTLGAPIDGKVPLEHDGFSAVEAIAPGVIERQSVDEPVQTGYKSVDAMIPIGRGQRELIIGDRQTGKSALAIDAIINQRDSGIKCIYVAIGQKASTIANVVRKLEEHGALANTIVVVATASESAALQYLAPYAGCAMGEYFRDRGEDALIIYDDLSKQAVAYRQISLLLRRPPGREAYPGDVFYLHSRLLERASRVNAEYVENYTKGEVKGKTGSLTALPIIETQAGDVSAFVPTNVISITDGQIFLESNLFNAGIRPAVNPGISVSRVGGAAQTKIMKKLSGGIRTALAQYRELAAFSQFASDLDDATRKQLNHGQKVTELLKQKQYAPMSVAQQALVLFAAERGYLEDVELAKIGDFEAALMAYVDREQGELMQQINQTGAYNDYIEGKLKGILDTFKATQSW.

169-176 (GDRQTGKS) contacts ATP.

It belongs to the ATPase alpha/beta chains family. As to quaternary structure, F-type ATPases have 2 components, CF(1) - the catalytic core - and CF(0) - the membrane proton channel. CF(1) has five subunits: alpha(3), beta(3), gamma(1), delta(1), epsilon(1). CF(0) has three main subunits: a(1), b(2) and c(9-12). The alpha and beta chains form an alternating ring which encloses part of the gamma chain. CF(1) is attached to CF(0) by a central stalk formed by the gamma and epsilon chains, while a peripheral stalk is formed by the delta and b chains.

The protein localises to the cell inner membrane. The enzyme catalyses ATP + H2O + 4 H(+)(in) = ADP + phosphate + 5 H(+)(out). Its function is as follows. Produces ATP from ADP in the presence of a proton gradient across the membrane. The alpha chain is a regulatory subunit. This is ATP synthase subunit alpha from Sodalis glossinidius (strain morsitans).